The following is a 362-amino-acid chain: Very-long-chain (3R)-3-hydroxyacyl-CoA dehydratase 3 (362 aa).

N-acetylmethionine is present on Met1. The Cytoplasmic segment spans residues 1–149 (MENQVLTPHV…ETLTSLKKGY (149 aa)). In terms of domain architecture, CS spans 5-94 (VLTPHVYWAQ…KESQWWERLT (90 aa)). Residue Thr7 is modified to Phosphothreonine. The stretch at 111 to 136 (LDESDAEMELRAKEEEQLNKLRLESQ) forms a coiled coil. A phosphoserine mark is found at Ser114 and Ser135. The helical transmembrane segment at 150–170 (LFMYNLVQFLGFSWIFVNMTV) threads the bilayer. The Lumenal portion of the chain corresponds to 171 to 189 (RFFILGKESFYDTFHTVAD). A helical transmembrane segment spans residues 190 to 210 (MMYFCQMLAAVESINAAIGVT). Residues 211–212 (KS) are Cytoplasmic-facing. Residues 213–233 (PVVPSLFQLLGRNFILFIIFG) traverse the membrane as a helical segment. The Lumenal portion of the chain corresponds to 234–242 (TMEEMQNKA). Residues 243-263 (VVFFVFYIWSTVEIFRYPFYM) form a helical membrane-spanning segment. Over 264-280 (LSCIDMDWKVLTWLRYT) the chain is Cytoplasmic. The helical transmembrane segment at 281-301 (VWIPLYPMGCLAEAVSVIQSI) threads the bilayer. Residues Tyr286 and Glu293 contribute to the active site. Residues 302 to 325 (PVFNETGRFSFTLPYPVKIKVRFS) lie on the Lumenal side of the membrane. The chain crosses the membrane as a helical span at residues 326–346 (FFLQIYLILLFLGLYVNFRYL). Topologically, residues 347–362 (YKQRRRRFGQKKKKIH) are cytoplasmic.

Belongs to the very long-chain fatty acids dehydratase HACD family. May interact with enzymes of the ELO family (including ELOVL1); with those enzymes that mediate condensation, the first of the four steps of the reaction cycle responsible for fatty acids elongation, may be part of a larger fatty acids elongase complex. Interacts with RAC1. Associates with internalized insulin receptor/INSR complexes on Golgi/endosomal membranes; HACD3/PTPLAD1 together with ATIC and PRKAA2/AMPK2 is proposed to be part of a signaling network regulating INSR autophosphorylation and endocytosis.

It localises to the endoplasmic reticulum membrane. It catalyses the reaction a very-long-chain (3R)-3-hydroxyacyl-CoA = a very-long-chain (2E)-enoyl-CoA + H2O. It carries out the reaction (3R)-hydroxyhexadecanoyl-CoA = (2E)-hexadecenoyl-CoA + H2O. The protein operates within lipid metabolism; fatty acid biosynthesis. Its function is as follows. Catalyzes the third of the four reactions of the long-chain fatty acids elongation cycle. This endoplasmic reticulum-bound enzymatic process, allows the addition of two carbons to the chain of long- and very long-chain fatty acids/VLCFAs per cycle. This enzyme catalyzes the dehydration of the 3-hydroxyacyl-CoA intermediate into trans-2,3-enoyl-CoA, within each cycle of fatty acid elongation. Thereby, it participates in the production of VLCFAs of different chain lengths that are involved in multiple biological processes as precursors of membrane lipids and lipid mediators. Involved in Rac1-signaling pathways leading to the modulation of gene expression. Promotes insulin receptor/INSR autophosphorylation and is involved in INSR internalization. The sequence is that of Very-long-chain (3R)-3-hydroxyacyl-CoA dehydratase 3 from Bos taurus (Bovine).